A 239-amino-acid chain; its full sequence is 7-cyano-7-deazaguanine synthase (239 aa).

8-18 contacts ATP; it reads FSGGLDSTACL. Cys-194, Cys-209, Cys-212, and Cys-215 together coordinate Zn(2+).

Belongs to the QueC family. Zn(2+) is required as a cofactor.

The enzyme catalyses 7-carboxy-7-deazaguanine + NH4(+) + ATP = 7-cyano-7-deazaguanine + ADP + phosphate + H2O + H(+). Its pathway is purine metabolism; 7-cyano-7-deazaguanine biosynthesis. Functionally, catalyzes the ATP-dependent conversion of 7-carboxy-7-deazaguanine (CDG) to 7-cyano-7-deazaguanine (preQ(0)). The chain is 7-cyano-7-deazaguanine synthase from Pyrococcus horikoshii (strain ATCC 700860 / DSM 12428 / JCM 9974 / NBRC 100139 / OT-3).